Reading from the N-terminus, the 308-residue chain is MTPAERTVLMVVHTGREEATETARRVQKVLGDNGIALRVLSAEAVDRGPLHLAPDDMRAMGVEIEVVDADPLAARGCELVLVLGGDGTFLRAAELARNADIPVLGVNLGRIGFLAEAEAEAIDKVLEHVVARDYRVENRMTLDVVVRHQGTVSDHGWALNEVSLEKGPRLGVLGVVVEIDGRPVSAFGCDGVLVSTPTGSTAYAFSAGGPVLWPDLEAILVVPNNAHALFGRPMVTSPAATIAIEIEADGHDALVFCDGRREMLIPAGSRIEVKRCDTAVKWARLDSAPFTDRLVRKFRLPVTGWRGN.

Residue Asp86 is the Proton acceptor of the active site. Residues 86–87 (DG), Arg91, 160–161 (NE), Asp190, and 201–206 (TAYAFS) contribute to the NAD(+) site.

It belongs to the NAD kinase family. It depends on a divalent metal cation as a cofactor.

It localises to the cytoplasm. It catalyses the reaction NAD(+) + ATP = ADP + NADP(+) + H(+). Functionally, involved in the regulation of the intracellular balance of NAD and NADP, and is a key enzyme in the biosynthesis of NADP. Catalyzes specifically the phosphorylation on 2'-hydroxyl of the adenosine moiety of NAD to yield NADP. This is NAD kinase from Mycolicibacterium paratuberculosis (strain ATCC BAA-968 / K-10) (Mycobacterium paratuberculosis).